The sequence spans 179 residues: NADH-quinone oxidoreductase subunit I (179 aa).

2 4Fe-4S ferredoxin-type domains span residues 45 to 74 and 90 to 119; these read RHPD…VEAA and KVYE…LGNE. Residues Cys54, Cys57, Cys60, Cys64, Cys99, Cys102, Cys105, and Cys109 each contribute to the [4Fe-4S] cluster site. Positions 146-179 are disordered; it reads PQRREAQRTGKPVRLGFKVPKGPRPELEGVEYPR. Residues 168–179 are compositionally biased toward basic and acidic residues; the sequence is PRPELEGVEYPR.

The protein belongs to the complex I 23 kDa subunit family. NDH-1 is composed of 15 different subunits. Subunits NuoA, H, J, K, L, M, N constitute the membrane sector of the complex. It depends on [4Fe-4S] cluster as a cofactor.

It localises to the cell membrane. It carries out the reaction a quinone + NADH + 5 H(+)(in) = a quinol + NAD(+) + 4 H(+)(out). Functionally, NDH-1 shuttles electrons from NADH, via FMN and iron-sulfur (Fe-S) centers, to quinones in the respiratory chain. The immediate electron acceptor for the enzyme in this species is believed to be ubiquinone. Couples the redox reaction to proton translocation (for every two electrons transferred, four hydrogen ions are translocated across the cytoplasmic membrane), and thus conserves the redox energy in a proton gradient. In Deinococcus geothermalis (strain DSM 11300 / CIP 105573 / AG-3a), this protein is NADH-quinone oxidoreductase subunit I.